The following is a 60-amino-acid chain: Large ribosomal subunit protein bL32 (60 aa).

The span at 1-23 (MAKHPVPKKKTSKARRDARRSHH) shows a compositional bias: basic residues. The interval 1–30 (MAKHPVPKKKTSKARRDARRSHHALTPPTL) is disordered.

In terms of assembly, part of the 50S ribosomal subunit.

Functionally, found on the solvent side of the large subunit. The sequence is that of Large ribosomal subunit protein bL32 (rpmF) from Thermus thermophilus (strain ATCC 27634 / DSM 579 / HB8).